A 267-amino-acid chain; its full sequence is Undecaprenyl-diphosphatase 1 (267 aa).

Helical transmembrane passes span 6 to 26 (VLVV…AAGL), 41 to 60 (AALS…IYFW), 83 to 103 (HLLL…WLVL), 109 to 129 (LVGQ…LWGC), 142 to 162 (MSWV…VPGV), 185 to 205 (FSML…FWGL), 217 to 237 (LLMA…GMMA), and 244 to 264 (FVPF…LVYF).

Belongs to the UppP family.

It is found in the cell inner membrane. It catalyses the reaction di-trans,octa-cis-undecaprenyl diphosphate + H2O = di-trans,octa-cis-undecaprenyl phosphate + phosphate + H(+). Catalyzes the dephosphorylation of undecaprenyl diphosphate (UPP). Confers resistance to bacitracin. This Paramagnetospirillum magneticum (strain ATCC 700264 / AMB-1) (Magnetospirillum magneticum) protein is Undecaprenyl-diphosphatase 1.